Here is a 236-residue protein sequence, read N- to C-terminus: Ras-related protein RabY (236 aa).

18 to 25 (GDRKTGKT) contributes to the GTP binding site. An Effector region motif is present at residues 40 to 48 (YRQTNLLHF). Residues 66-70 (DSQAD) and 126-129 (NKSD) contribute to the GTP site. Over residues 192 to 225 (QQQQQQQQQQQQQQQQQQQQQQQQQQQQQQQHQQ) the composition is skewed to low complexity. The disordered stretch occupies residues 192–236 (QQQQQQQQQQQQQQQQQQQQQQQQQQQQQQQHQQSSKTKIGCLIQ). Cys-233 carries the cysteine methyl ester modification. Cys-233 carries the S-geranylgeranyl cysteine lipid modification. A propeptide spans 234–236 (LIQ) (removed in mature form).

This sequence belongs to the small GTPase superfamily. Rab family.

It is found in the cell membrane. The polypeptide is Ras-related protein RabY (rabY) (Dictyostelium discoideum (Social amoeba)).